A 240-amino-acid chain; its full sequence is PF03932 family protein CutC (240 aa).

Belongs to the CutC family.

The protein resides in the cytoplasm. The chain is PF03932 family protein CutC from Xanthomonas axonopodis pv. citri (strain 306).